We begin with the raw amino-acid sequence, 1507 residues long: Paired amphipathic helix protein sin-3 (1507 aa).

Disordered stretches follow at residues 1–26 (MYNP…TNNA), 228–286 (PLAL…PPRV), 397–450 (ELGS…MMEE), 543–569 (VDDV…DSSK), and 1349–1434 (IPRE…MDHL). The segment covering 16–26 (DQSQQQPTNNA) has biased composition (polar residues). Basic residues predominate over residues 270–279 (RQNRPGRRKK). The PAH domain occupies 282–352 (GPPRVDEALA…LGFNTFLPTG (71 aa)). Acidic residues predominate over residues 427 to 438 (DGIDDEDDEESG). Composition is skewed to basic and acidic residues over residues 439 to 450 (IEDKNNEEMMEE) and 555 to 568 (EIKK…KDSS). Acidic residues-rich tracts occupy residues 1354–1365 (KDDDDDDDEEGN), 1373–1382 (NVKDEDDGGD), and 1389–1421 (PDDD…DEPE).

In terms of assembly, component of the SIN3S complex, which contains at least sin-3, hda-1, athp-1 and mrg-1. Interacts with ztf-11; the interaction is weak. Interacts with cfp-1. In terms of tissue distribution, expressed in all ray structural cells including ray 6, 7, 8 and 9 of the male tail. Also expressed in the inner labial neurons, socket cells, the cephalic neurons in the head and the ventral nerve cord.

The protein resides in the nucleus. Probable transcriptional repressor required for the deposition of dimethylated 'Lys-9' of histone H3 (H3K9me2) on asynapsed chromosome pairs (both autosomes and sex chromosomes) during meiosis, but this does not seem to solely affect the transcriptional status. Plays a role in ray fusion and patterning in the male tail, and this may be through activity of the histone deacetylase complex (HDAC). The polypeptide is Paired amphipathic helix protein sin-3 (Caenorhabditis elegans).